A 105-amino-acid polypeptide reads, in one-letter code: DNA-directed RNA polymerase RPB9 homolog (105 aa).

The Zn(2+) site is built by Cys4, Cys7, Cys24, Cys26, Cys73, Cys76, and Cys96. Residues 4–26 form a C4-type; atypical zinc finger; sequence CKACSSCMVRTYVDGNIIFRCSC.

The protein belongs to the Asfivirus DNA-directed RNA polymerase RPB9 homolog family. As to quaternary structure, part of the viral DNA-directed RNA polymerase that consists of 8 polII-like subunits (RPB1, RPB2, RPB3, RPB5, RPB6, RPB7, RPB9, RPB10), a capping enzyme and a termination factor.

It localises to the host cytoplasm. Its function is as follows. Component of the DNA-directed RNA polymerase (RNAP) that catalyzes the transcription in the cytoplasm of viral DNA into RNA using the four ribonucleoside triphosphates as substrates. This is DNA-directed RNA polymerase RPB9 homolog from African swine fever virus (isolate Pig/Kenya/KEN-50/1950) (ASFV).